Consider the following 348-residue polypeptide: F-box protein At2g20380 (348 aa).

In terms of domain architecture, F-box spans 14 to 60; that stretch reads SPESNSLPNDLIVTILARLSQSYYPKLSLVSKTFRAILASPELYQTR.

This chain is F-box protein At2g20380, found in Arabidopsis thaliana (Mouse-ear cress).